Consider the following 136-residue polypeptide: uncharacterized protein (136 aa).

An N-terminal signal peptide occupies residues 1 to 19; the sequence is MKKLLMVILGIALIGMAYA.

This is an uncharacterized protein from Methanocaldococcus jannaschii (strain ATCC 43067 / DSM 2661 / JAL-1 / JCM 10045 / NBRC 100440) (Methanococcus jannaschii).